The sequence spans 134 residues: ATP synthase epsilon chain (134 aa).

This sequence belongs to the ATPase epsilon chain family. In terms of assembly, F-type ATPases have 2 components, CF(1) - the catalytic core - and CF(0) - the membrane proton channel. CF(1) has five subunits: alpha(3), beta(3), gamma(1), delta(1), epsilon(1). CF(0) has three main subunits: a, b and c.

The protein resides in the cell membrane. In terms of biological role, produces ATP from ADP in the presence of a proton gradient across the membrane. The sequence is that of ATP synthase epsilon chain from Listeria welshimeri serovar 6b (strain ATCC 35897 / DSM 20650 / CCUG 15529 / CIP 8149 / NCTC 11857 / SLCC 5334 / V8).